A 26-amino-acid polypeptide reads, in one-letter code: uncharacterized protein (26 aa).

It localises to the plastid. The protein localises to the chloroplast. This is an uncharacterized protein from Trieres chinensis (Marine centric diatom).